A 1132-amino-acid chain; its full sequence is NUT family member 1 (1132 aa).

Disordered stretches follow at residues 1–56, 337–365, 383–405, 476–584, 693–714, 873–892, and 922–1017; these read MASD…SVFS, AASK…EIPP, LATG…EGMY, EEED…VERR, RGTP…GERD, DASS…NSFS, and PLNV…DEEL. The segment covering 21-36 has biased composition (pro residues); sequence APSPSPALPFLPPTSD. Over residues 337 to 352 the composition is skewed to basic residues; it reads AASKTRAPRRRQRKAQ. The segment covering 395-404 has biased composition (acidic residues); the sequence is EGQQQEEEGM. Polar residues-rich tracts occupy residues 487 to 497, 697 to 706, and 883 to 892; these read SGAQLDSSPSG, MAQSYDQNPS, and EAGSRGNSFS. Residues 932–942 show a composition bias toward basic and acidic residues; it reads GEGRVDPDLSK. Positions 950 to 971 are enriched in polar residues; the sequence is QESQESYTTGTPKATSSHQGLG. Phosphoserine is present on residues serine 1026, serine 1029, and serine 1031. Residues 1031–1132 are disordered; it reads SPREHPLSPH…GRRKKRRRSQ (102 aa). An N5-methylglutamine modification is found at glutamine 1046. Residues 1123-1132 are compositionally biased toward basic residues; that stretch reads GRRKKRRRSQ.

Belongs to the NUT family. In terms of processing, methylated at Gln-1046 by N6AMT1. Post-translationally, phosphorylation on Ser-1026, Ser-1029 or Ser-1031 is important for cytoplasmic export. In terms of tissue distribution, specifically expressed in testis.

Its subcellular location is the cytoplasm. It is found in the nucleus. Functionally, plays a role in the regulation of proliferation. Regulates TERT expression by modulating SP1 binding to TERT promoter binding sites. The chain is NUT family member 1 from Homo sapiens (Human).